A 418-amino-acid chain; its full sequence is Gamma-glutamyl phosphate reductase (418 aa).

Belongs to the gamma-glutamyl phosphate reductase family.

It localises to the cytoplasm. The enzyme catalyses L-glutamate 5-semialdehyde + phosphate + NADP(+) = L-glutamyl 5-phosphate + NADPH + H(+). The protein operates within amino-acid biosynthesis; L-proline biosynthesis; L-glutamate 5-semialdehyde from L-glutamate: step 2/2. In terms of biological role, catalyzes the NADPH-dependent reduction of L-glutamate 5-phosphate into L-glutamate 5-semialdehyde and phosphate. The product spontaneously undergoes cyclization to form 1-pyrroline-5-carboxylate. The chain is Gamma-glutamyl phosphate reductase from Pelobacter propionicus (strain DSM 2379 / NBRC 103807 / OttBd1).